We begin with the raw amino-acid sequence, 351 residues long: Adenine deaminase (351 aa).

Zn(2+)-binding residues include histidine 19, histidine 21, and histidine 208. Glutamate 211 (proton donor) is an active-site residue. Aspartate 288 contributes to the Zn(2+) binding site. Aspartate 289 is a substrate binding site.

This sequence belongs to the metallo-dependent hydrolases superfamily. Adenosine and AMP deaminases family. Adenine deaminase type 2 subfamily. It depends on Zn(2+) as a cofactor.

The protein resides in the cytoplasm. Its subcellular location is the nucleus. The enzyme catalyses adenine + H2O + H(+) = hypoxanthine + NH4(+). Catalyzes the hydrolytic deamination of adenine to hypoxanthine. Plays an important role in the purine salvage pathway and in nitrogen catabolism. This Aspergillus oryzae (strain ATCC 42149 / RIB 40) (Yellow koji mold) protein is Adenine deaminase (aah1).